Reading from the N-terminus, the 138-residue chain is von Willebrand factor C domain-containing protein 2-like (138 aa).

Residues 1 to 21 form the signal peptide; it reads MALHIHEACILLLVIPGLVTS. Positions 51 to 110 constitute a VWFC domain; sequence KGCVDDSGFVYKLGERFFPGHSNCPCVCALDGPVCDQPECPKIHPKCTKVEHNGCCPECK.

In terms of assembly, peripherally associated with AMPAR complex. AMPAR complex consists of an inner core made of 4 pore-forming GluA/GRIA proteins (GRIA1, GRIA2, GRIA3 and GRIA4) and 4 major auxiliary subunits arranged in a twofold symmetry. One of the two pairs of distinct binding sites is occupied either by CNIH2, CNIH3 or CACNG2, CACNG3. The other harbors CACNG2, CACNG3, CACNG4, CACNG8 or GSG1L. This inner core of AMPAR complex is complemented by outer core constituents binding directly to the GluA/GRIA proteins at sites distinct from the interaction sites of the inner core constituents. Outer core constituents include at least PRRT1, PRRT2, CKAMP44/SHISA9, FRRS1L and NRN1. The proteins of the inner and outer core serve as a platform for other, more peripherally associated AMPAR constituents, including VWC2L. Alone or in combination, these auxiliary subunits control the gating and pharmacology of the AMPAR complex and profoundly impact their biogenesis and protein processing.

Its subcellular location is the secreted. It localises to the synapse. In terms of biological role, may play a role in neurogenesis. May play a role in bone differentiation and matrix mineralization. The sequence is that of von Willebrand factor C domain-containing protein 2-like (VWC2L) from Macaca fascicularis (Crab-eating macaque).